A 102-amino-acid polypeptide reads, in one-letter code: A-type ATP synthase subunit F (102 aa).

Belongs to the V-ATPase F subunit family. Has multiple subunits with at least A(3), B(3), C, D, E, F, H, I and proteolipid K(x).

It localises to the cell membrane. Component of the A-type ATP synthase that produces ATP from ADP in the presence of a proton gradient across the membrane. The sequence is that of A-type ATP synthase subunit F from Thermococcus sibiricus (strain DSM 12597 / MM 739).